The primary structure comprises 371 residues: Protein RecA (371 aa).

75-82 (GPESSGKT) is a binding site for ATP. A disordered region spans residues 343-371 (KAKDEPIADEDQPIDVVPNFDDQDVEPQN).

It belongs to the RecA family.

The protein localises to the cytoplasm. In terms of biological role, can catalyze the hydrolysis of ATP in the presence of single-stranded DNA, the ATP-dependent uptake of single-stranded DNA by duplex DNA, and the ATP-dependent hybridization of homologous single-stranded DNAs. It interacts with LexA causing its activation and leading to its autocatalytic cleavage. The protein is Protein RecA of Corynebacterium urealyticum (strain ATCC 43042 / DSM 7109).